The following is a 343-amino-acid chain: Envelope glycoprotein K (343 aa).

The N-terminal stretch at Met-1–Gln-31 is a signal peptide. Residues Leu-32 to Tyr-118 lie on the Extracellular side of the membrane. Asn-57 and Asn-89 each carry an N-linked (GlcNAc...) asparagine; by host glycan. A helical transmembrane segment spans residues Leu-119–Cys-139. Residues Leu-140–Ser-213 lie on the Cytoplasmic side of the membrane. The helical transmembrane segment at Ala-214 to Val-234 threads the bilayer. At Gly-235 to Tyr-251 the chain is on the extracellular side. The chain crosses the membrane as a helical span at residues Leu-252–Ile-272. Residues Tyr-273–Thr-303 are Cytoplasmic-facing. The helical transmembrane segment at Val-304–Ile-324 threads the bilayer. The Extracellular portion of the chain corresponds to Leu-325–Ser-343.

It belongs to the alphaherpesvirinae glycoprotein K family. In terms of assembly, interacts (via UL20 interaction region) with protein UL20 homolog (via N-terminus); this interaction probably plays a role in the coordinate transport of protein UL20 homolog and gK to the trans-Golgi network (TGN), and is required for the cell surface expression of gK. In terms of processing, N-glycosylated.

It is found in the host cell membrane. It localises to the host endosome membrane. The protein resides in the host Golgi apparatus membrane. In terms of biological role, glycoprotein that probably modulates membrane fusion events during secondary envelopment of cytoplasmic capsids that bud into specific trans-Golgi network (TGN)-derived membranes. This is Envelope glycoprotein K (gK) from Equine herpesvirus 1 (strain Ab4p) (EHV-1).